Consider the following 369-residue polypeptide: Dual specificity protein phosphatase 1-B (369 aa).

Residues 21–138 (RAHKCLILDC…FSSQCPEFCN (118 aa)) form the Rhodanese domain. The residue at position 168 (threonine 168) is a Phosphothreonine; by MAPK1. Residues 175-316 (GPVEILPFLY…LLQFESQVLA (142 aa)) form the Tyrosine-protein phosphatase domain. The Phosphocysteine intermediate role is filled by cysteine 260.

Belongs to the protein-tyrosine phosphatase family. Non-receptor class dual specificity subfamily. Phosphorylated by MAPK1/ERK2 at Thr-168 and at one or more serine residues in a progesterone-dependent manner. Phosphorylation reduces its rate of degradation but does not seem to affect phosphatase activity.

The protein resides in the nucleus. The catalysed reaction is O-phospho-L-seryl-[protein] + H2O = L-seryl-[protein] + phosphate. The enzyme catalyses O-phospho-L-threonyl-[protein] + H2O = L-threonyl-[protein] + phosphate. It catalyses the reaction O-phospho-L-tyrosyl-[protein] + H2O = L-tyrosyl-[protein] + phosphate. Dual specificity phosphatase that dephosphorylates MAP kinase MAPK1/ERK2 on both 'Thr-188' and 'Tyr-190', regulating its activity during the meiotic cell cycle. The polypeptide is Dual specificity protein phosphatase 1-B (Xenopus laevis (African clawed frog)).